The sequence spans 232 residues: Uracil-DNA glycosylase (232 aa).

Asp-66 serves as the catalytic Proton acceptor.

The protein belongs to the uracil-DNA glycosylase (UDG) superfamily. UNG family.

It localises to the cytoplasm. The enzyme catalyses Hydrolyzes single-stranded DNA or mismatched double-stranded DNA and polynucleotides, releasing free uracil.. Functionally, excises uracil residues from the DNA which can arise as a result of misincorporation of dUMP residues by DNA polymerase or due to deamination of cytosine. The sequence is that of Uracil-DNA glycosylase from Lactobacillus acidophilus (strain ATCC 700396 / NCK56 / N2 / NCFM).